The chain runs to 445 residues: MTTILKSLPKGENVGIAFSGGLDTSAALLWMKQKGAKVFAYTANLGQPDEADYDAIPRKAMEFGAEKARLVDCRTQLVHEGIAAIQAGAFHVSTGGIAYFNTTPLGRAVTGTMLVSAMKEDGVNIWGDGSTYKGNDIERFYRYGLLTNPALRIYKPWLDQQFIDELGGRAEMSAFMTSHGFAYKMSAEKAYSTDSNLLGATHEAKDLEHLDSGIKIVNPIMGVPFWRDDCAVKAEAVTVRFEEGQPVALNGQTFTDPVAMFYEANAIGGRHGLGMSDQIENRIIEAKSRGIYEAPGMALLHIAYERLVTGIHNEDTIEQYRINGMKLGRLLYQGRWFDSQALMLRETAQRWVARAVTGEVTLELRRGNDYSILNTVSPNLTYAPERLSMEKVEDAPFTPADRIGQLTMRNLDITDTRAKLGLYAKTGLLSSGEGTPIPQLENDKG.

ATP contacts are provided by residues 17–25 (AFSGGLDTS) and Ala-43. Tyr-99 is a binding site for L-citrulline. Residues Gly-129 and Thr-131 each coordinate ATP. The L-aspartate site is built by Thr-131, Asn-135, and Asp-136. Asn-135 lines the L-citrulline pocket. Asp-136 is a binding site for ATP. 2 residues coordinate L-citrulline: Arg-139 and Ser-192. Asp-194 is an ATP binding site. L-citrulline contacts are provided by Thr-201, Glu-203, and Glu-280.

The protein belongs to the argininosuccinate synthase family. Type 2 subfamily. In terms of assembly, homotetramer.

The protein localises to the cytoplasm. It carries out the reaction L-citrulline + L-aspartate + ATP = 2-(N(omega)-L-arginino)succinate + AMP + diphosphate + H(+). Its pathway is amino-acid biosynthesis; L-arginine biosynthesis; L-arginine from L-ornithine and carbamoyl phosphate: step 2/3. This chain is Argininosuccinate synthase, found in Rhodopseudomonas palustris (strain ATCC BAA-98 / CGA009).